Consider the following 485-residue polypeptide: Cobyric acid synthase (485 aa).

The GATase cobBQ-type domain occupies T250 to V448. C334 acts as the Nucleophile in catalysis. The active site involves H440.

It belongs to the CobB/CobQ family. CobQ subfamily.

Its pathway is cofactor biosynthesis; adenosylcobalamin biosynthesis. In terms of biological role, catalyzes amidations at positions B, D, E, and G on adenosylcobyrinic A,C-diamide. NH(2) groups are provided by glutamine, and one molecule of ATP is hydrogenolyzed for each amidation. The chain is Cobyric acid synthase from Polaromonas naphthalenivorans (strain CJ2).